The following is a 388-amino-acid chain: MSWWWAGAIGAAKKKLDEDEPSQSFESVALIIGVTGIVGNSLAEILPLSDTPGGPWKVYGVARRPRPTWNADHPIDYIQCDVSDAEDTRSKLSPLTDVTHVFYVTWTNRESESENCEANGSMLRNVLQAIIPYAPNLRHVCLQTGTKHYLGPFTNVDGPRHDPPFTEDMPRLQIQNFYYTQEDILFEEIKKIETVTWSIHRPNMIFGFSPYSLMNIVGTLCVYAAICKHEGSPLLFPGSKKAWEGFMTASDADLIAEQQIWAAVDPYAKNEAFNCNNADIFKWKHLWKILAEQFGIEEYGFEEGKNLGLVEMMKGKERVWEEMVKENQLQEKKLEEVGVWWFADVILGVEGMIDSMNKSKEYGFLGFRNSNNSFISWIDKYKAFKIVP.

Ser2 is subject to N-acetylserine. Residues 35-37, 63-64, 81-82, Thr105, and Gln143 each bind NADP(+); these read TGI, RR, and DV. Active-site residues include Lys147 and Tyr178. Residues Tyr178, Ile205, and 212-214 each bind NADP(+); that span reads SLM.

The protein belongs to the short-chain dehydrogenases/reductases (SDR) family. Highly divergent. Homodimer. Expressed in roots, stems, leaves, flowers, seeds and siliques. Expressed in the vascular bundles.

It catalyses the reaction 5beta-cholestan-3-one + NADP(+) = cholest-4-en-3-one + NADPH + H(+). The catalysed reaction is 4,5beta-dihydrocortisone + NADP(+) = cortisone + NADPH + H(+). Functionally, involved in vascular strand development. Catalyzes the stereospecific conversion of progesterone to 5-beta-pregnane-3,20-dione. Can use progesterone, testosterone, 21-acetyl cortexone, 2-cyclohexenone, but-1-en-3-one, ethyl acrylate, ethylmethacrylate, cortisone and canarigenone as substrates, lower activity with 3-methyl-2-cyclohexenone and 3,5,5-trimethyl-2-cyclohexenone as substrate, and no activity with canarigenin, canarigenin digitoxoside and pregnenolone. May be involved in the formation of 5-beta phytoecdysteroids. The sequence is that of 3-oxo-Delta(4,5)-steroid 5-beta-reductase (VEP1) from Arabidopsis thaliana (Mouse-ear cress).